A 261-amino-acid polypeptide reads, in one-letter code: MSESLHLTRNGSILEITLDRPKANAIDAKTSFEMGEVFLNFRDDPQLRVAIITGAGEKFFSAGWDLKAAAEGEAPDADFGPGGFAGLTEIFNLDKPVIAAVNGYAFGGGFELALAADFIVCADNASFALPEAKLGIVPDSGGVLRLPKILPPAIVNEMVMTGRRMGAEEALRWGIVNRVVSQAELMDNARELAQQLVNSAPLAIAALKEIYRTTSEMPVEEAYRYIRSGVLKHYPSVLHSEDAIEGPLAFAEKRDPVWKGR.

The active-site Nucleophile is Glu111. Glu131 (proton acceptor) is an active-site residue.

This sequence belongs to the enoyl-CoA hydratase/isomerase family.

The catalysed reaction is (R)-carnitinyl-CoA = crotonobetainyl-CoA + H2O. The protein operates within amine and polyamine metabolism; carnitine metabolism. Its function is as follows. Catalyzes the reversible dehydration of L-carnitinyl-CoA to crotonobetainyl-CoA. In Escherichia coli (strain ATCC 8739 / DSM 1576 / NBRC 3972 / NCIMB 8545 / WDCM 00012 / Crooks), this protein is Carnitinyl-CoA dehydratase.